Here is a 510-residue protein sequence, read N- to C-terminus: Inositol-3-phosphate synthase (510 aa).

Residues Gly70, Gly71, Asn72, Asn73, Asp143, Ile180, Gln190, Arg193, Thr230, Ala231, Asn232, Thr233, Gly281, Ser282, Asp306, Ser309, Asn340, Asn341, Asp342, Lys355, Gly393, Asp394, Asp422, and Ser423 each coordinate NAD(+).

This sequence belongs to the myo-inositol 1-phosphate synthase family. NAD(+) serves as cofactor.

It localises to the cytoplasm. It is found in the cytosol. The protein localises to the nucleus. It carries out the reaction D-glucose 6-phosphate = 1D-myo-inositol 3-phosphate. Its pathway is polyol metabolism; myo-inositol biosynthesis; myo-inositol from D-glucose 6-phosphate: step 1/2. Functionally, key enzyme in myo-inositol biosynthesis pathway that catalyzes the conversion of glucose 6-phosphate to 1-myo-inositol 1-phosphate in a NAD-dependent manner. This chain is Inositol-3-phosphate synthase, found in Zea mays (Maize).